The sequence spans 119 residues: Integration host factor subunit beta (119 aa).

The tract at residues 91-119 (DLVGNDQGDDSSNGSSDPLQSVMDMHAMH) is disordered. A compositionally biased stretch (low complexity) spans 94 to 107 (GNDQGDDSSNGSSD).

The protein belongs to the bacterial histone-like protein family. Heterodimer of an alpha and a beta chain.

This protein is one of the two subunits of integration host factor, a specific DNA-binding protein that functions in genetic recombination as well as in transcriptional and translational control. The chain is Integration host factor subunit beta from Bordetella parapertussis (strain 12822 / ATCC BAA-587 / NCTC 13253).